A 186-amino-acid chain; its full sequence is Peptidyl-tRNA hydrolase (186 aa).

Y14 provides a ligand contact to tRNA. The Proton acceptor role is filled by H19. TRNA contacts are provided by Y60 and N62.

This sequence belongs to the PTH family. Monomer.

Its subcellular location is the cytoplasm. It catalyses the reaction an N-acyl-L-alpha-aminoacyl-tRNA + H2O = an N-acyl-L-amino acid + a tRNA + H(+). Functionally, hydrolyzes ribosome-free peptidyl-tRNAs (with 1 or more amino acids incorporated), which drop off the ribosome during protein synthesis, or as a result of ribosome stalling. Catalyzes the release of premature peptidyl moieties from peptidyl-tRNA molecules trapped in stalled 50S ribosomal subunits, and thus maintains levels of free tRNAs and 50S ribosomes. The protein is Peptidyl-tRNA hydrolase of Mycoplasmopsis pulmonis (strain UAB CTIP) (Mycoplasma pulmonis).